A 230-amino-acid chain; its full sequence is Orotidine 5'-phosphate decarboxylase (230 aa).

Residues D10, K31, 58–67 (DLKLHDIPNT), T117, R179, Q188, G208, and R209 contribute to the substrate site. The Proton donor role is filled by K60.

It belongs to the OMP decarboxylase family. Type 1 subfamily. Homodimer.

It catalyses the reaction orotidine 5'-phosphate + H(+) = UMP + CO2. It functions in the pathway pyrimidine metabolism; UMP biosynthesis via de novo pathway; UMP from orotate: step 2/2. Its function is as follows. Catalyzes the decarboxylation of orotidine 5'-monophosphate (OMP) to uridine 5'-monophosphate (UMP). In Staphylococcus epidermidis (strain ATCC 12228 / FDA PCI 1200), this protein is Orotidine 5'-phosphate decarboxylase.